Consider the following 255-residue polypeptide: Acetylglutamate kinase (255 aa).

Residues 40–41 (GG), Arg-62, and Asn-157 contribute to the substrate site.

Belongs to the acetylglutamate kinase family. ArgB subfamily.

The protein resides in the cytoplasm. The catalysed reaction is N-acetyl-L-glutamate + ATP = N-acetyl-L-glutamyl 5-phosphate + ADP. It functions in the pathway amino-acid biosynthesis; L-arginine biosynthesis; N(2)-acetyl-L-ornithine from L-glutamate: step 2/4. Functionally, catalyzes the ATP-dependent phosphorylation of N-acetyl-L-glutamate. The protein is Acetylglutamate kinase of Parabacteroides distasonis (strain ATCC 8503 / DSM 20701 / CIP 104284 / JCM 5825 / NCTC 11152).